A 293-amino-acid chain; its full sequence is MPWIQLKLNTTGANAEDLSDALMEAGAVSITFQDTHDTPVFEPLPGETRLWGDTDVIGLFDAETDMNDVVAILENHPMLGAGFAHKIEQLEDKDWEREWMDNFHPMRFGERLWICPSWRDVPDENAVNVMLDPGLAFGTGTHPTTSLCLQWLDSLDLTGKTVIDFGCGSGILAIAALKLGAAKAIGIDIDPQAIQASRDNAERNGVSDRLELYLPKDQPEEMKADVVVANILAGPLRELAPLISVLPVSGGLLGLSGILASQAESVCEAYADSFALDPVVEKEEWCRITGRKN.

S-adenosyl-L-methionine is bound by residues threonine 145, glycine 166, aspartate 188, and asparagine 230.

This sequence belongs to the methyltransferase superfamily. PrmA family.

The protein localises to the cytoplasm. It carries out the reaction L-lysyl-[protein] + 3 S-adenosyl-L-methionine = N(6),N(6),N(6)-trimethyl-L-lysyl-[protein] + 3 S-adenosyl-L-homocysteine + 3 H(+). Methylates ribosomal protein L11. This Escherichia coli O81 (strain ED1a) protein is Ribosomal protein L11 methyltransferase.